Consider the following 190-residue polypeptide: Elongation factor P-like protein (190 aa).

This sequence belongs to the elongation factor P family.

The polypeptide is Elongation factor P-like protein (Pectobacterium carotovorum subsp. carotovorum (strain PC1)).